Reading from the N-terminus, the 358-residue chain is Valine dehydrogenase (358 aa).

Lys-88 is a catalytic residue. Residue 188 to 194 (GVGKVGH) coordinates NAD(+).

The protein belongs to the Glu/Leu/Phe/Val dehydrogenases family. As to quaternary structure, homodimer.

It is found in the cytoplasm. The catalysed reaction is L-valine + NAD(+) + H2O = 3-methyl-2-oxobutanoate + NH4(+) + NADH + H(+). Its pathway is amino-acid degradation; L-valine degradation. In terms of biological role, oxidative deamination of branched-chain amino acids. The catabolism of valine is the major source of fatty acid precursors for macrolide biosynthesis and a vital source of antibiotic precursors. This is Valine dehydrogenase (vdh) from Streptomyces virginiae (Streptomyces cinnamonensis).